Reading from the N-terminus, the 69-residue chain is Conotoxin SIVA (69 aa).

Positions M1–S21 are cleaved as a signal peptide. A propeptide spanning residues T22–R38 is cleaved from the precursor. Q39 is modified (pyrrolidone carboxylic acid). An O-linked (HexNAc...) serine glycan is attached at S45. 3 positions are modified to 4-hydroxyproline: P55, P60, and P61. Cysteine amide is present on C68.

It belongs to the conotoxin A superfamily. Post-translationally, contains 3 disulfide bonds. O-linked glycan consists of Hex3-HexNAc2 pentasaccharide. As to expression, expressed by the venom duct.

It is found in the secreted. Functionally, neurotoxin with probable activity on sodium channel. Induces intense repetitive firing of the frog neuromuscular junction, leading to a tetanic contracture in muscle fiber (spastic paralysis). In vivo, shows the same effect as the whole venom when injected on fish. Intraperitoneal injection into fish induces a period of rapid swimming followed by a spastic paralysis with stiff fibrillating fins. At high doses, the peptide is lethal to both fish and mice. The sequence is that of Conotoxin SIVA from Conus striatus (Striated cone).